The chain runs to 146 residues: 3-dehydroquinate dehydratase (146 aa).

The Proton acceptor role is filled by tyrosine 23. Substrate-binding residues include asparagine 74, histidine 80, and aspartate 87. The active-site Proton donor is histidine 100. Substrate contacts are provided by residues 101–102 and arginine 111; that span reads IS.

Belongs to the type-II 3-dehydroquinase family. As to quaternary structure, homododecamer.

The enzyme catalyses 3-dehydroquinate = 3-dehydroshikimate + H2O. The protein operates within metabolic intermediate biosynthesis; chorismate biosynthesis; chorismate from D-erythrose 4-phosphate and phosphoenolpyruvate: step 3/7. Catalyzes a trans-dehydration via an enolate intermediate. The chain is 3-dehydroquinate dehydratase from Bacillus cereus (strain G9842).